Here is a 479-residue protein sequence, read N- to C-terminus: 3-phytase B (479 aa).

A signal peptide spans 1–19 (MPRTSLLTLACALATGASA). 5 disulfide bridges follow: C71/C387, C128/C472, C216/C441, C225/C298, and C413/C421. H82 functions as the Nucleophile in the catalytic mechanism. N191 is a glycosylation site (N-linked (GlcNAc...) asparagine). N315 carries N-linked (GlcNAc...) asparagine glycosylation. D338 acts as the Proton donor in catalysis. An N-linked (GlcNAc...) asparagine glycan is attached at N458.

The protein belongs to the histidine acid phosphatase family. As to quaternary structure, homodimer.

The catalysed reaction is 1D-myo-inositol hexakisphosphate + H2O = 1D-myo-inositol 1,2,4,5,6-pentakisphosphate + phosphate. Catalyzes the hydrolysis of inorganic orthophosphate from phytate. This Aspergillus awamori (Black koji mold) protein is 3-phytase B (phyB).